Reading from the N-terminus, the 837-residue chain is Protein translocase subunit SecA 1 (837 aa).

Residues glutamine 85, 103–107 (GEGKT), and aspartate 492 each bind ATP. Residues 787-806 (QEVAKGEAVHPKEDGEEPKK) are compositionally biased toward basic and acidic residues. Positions 787 to 813 (QEVAKGEAVHPKEDGEEPKKKPIRKAV) are disordered. The Zn(2+) site is built by cysteine 821, cysteine 823, cysteine 832, and cysteine 833.

This sequence belongs to the SecA family. In terms of assembly, monomer and homodimer. Part of the essential Sec protein translocation apparatus which comprises SecA, SecYEG and auxiliary proteins SecDF. Other proteins may also be involved. Zn(2+) is required as a cofactor.

It is found in the cell membrane. It localises to the cytoplasm. The enzyme catalyses ATP + H2O + cellular proteinSide 1 = ADP + phosphate + cellular proteinSide 2.. Its function is as follows. Part of the Sec protein translocase complex. Interacts with the SecYEG preprotein conducting channel. Has a central role in coupling the hydrolysis of ATP to the transfer of proteins into and across the cell membrane, serving as an ATP-driven molecular motor driving the stepwise translocation of polypeptide chains across the membrane. The chain is Protein translocase subunit SecA 1 from Geobacillus thermodenitrificans (strain NG80-2).